A 227-amino-acid chain; its full sequence is Cytochrome c oxidase subunit 2 (227 aa).

Topologically, residues 1-14 (MAYPFQLGLXDATS) are mitochondrial intermembrane. Residues 15–45 (PIMEELLHFHDHTLMIVFLISSLVLYIITLM) traverse the membrane as a helical segment. Topologically, residues 46–59 (LTTKLTHTSTMDAQ) are mitochondrial matrix. The chain crosses the membrane as a helical span at residues 60–87 (EVETVWTILPAIILILIALPSLRILYMM). Over 88–227 (DEINNPSLTV…YFETWSAVMV (140 aa)) the chain is Mitochondrial intermembrane. Residues His161, Cys196, Glu198, Cys200, His204, and Met207 each coordinate Cu cation. Glu198 lines the Mg(2+) pocket.

The protein belongs to the cytochrome c oxidase subunit 2 family. In terms of assembly, component of the cytochrome c oxidase (complex IV, CIV), a multisubunit enzyme composed of 14 subunits. The complex is composed of a catalytic core of 3 subunits MT-CO1, MT-CO2 and MT-CO3, encoded in the mitochondrial DNA, and 11 supernumerary subunits COX4I, COX5A, COX5B, COX6A, COX6B, COX6C, COX7A, COX7B, COX7C, COX8 and NDUFA4, which are encoded in the nuclear genome. The complex exists as a monomer or a dimer and forms supercomplexes (SCs) in the inner mitochondrial membrane with NADH-ubiquinone oxidoreductase (complex I, CI) and ubiquinol-cytochrome c oxidoreductase (cytochrome b-c1 complex, complex III, CIII), resulting in different assemblies (supercomplex SCI(1)III(2)IV(1) and megacomplex MCI(2)III(2)IV(2)). Found in a complex with TMEM177, COA6, COX18, COX20, SCO1 and SCO2. Interacts with TMEM177 in a COX20-dependent manner. Interacts with COX20. Interacts with COX16. Requires Cu cation as cofactor.

Its subcellular location is the mitochondrion inner membrane. It catalyses the reaction 4 Fe(II)-[cytochrome c] + O2 + 8 H(+)(in) = 4 Fe(III)-[cytochrome c] + 2 H2O + 4 H(+)(out). In terms of biological role, component of the cytochrome c oxidase, the last enzyme in the mitochondrial electron transport chain which drives oxidative phosphorylation. The respiratory chain contains 3 multisubunit complexes succinate dehydrogenase (complex II, CII), ubiquinol-cytochrome c oxidoreductase (cytochrome b-c1 complex, complex III, CIII) and cytochrome c oxidase (complex IV, CIV), that cooperate to transfer electrons derived from NADH and succinate to molecular oxygen, creating an electrochemical gradient over the inner membrane that drives transmembrane transport and the ATP synthase. Cytochrome c oxidase is the component of the respiratory chain that catalyzes the reduction of oxygen to water. Electrons originating from reduced cytochrome c in the intermembrane space (IMS) are transferred via the dinuclear copper A center (CU(A)) of subunit 2 and heme A of subunit 1 to the active site in subunit 1, a binuclear center (BNC) formed by heme A3 and copper B (CU(B)). The BNC reduces molecular oxygen to 2 water molecules using 4 electrons from cytochrome c in the IMS and 4 protons from the mitochondrial matrix. The polypeptide is Cytochrome c oxidase subunit 2 (MT-CO2) (Vulpes corsac (Corsac fox)).